The primary structure comprises 347 residues: Quinolinate synthase (347 aa).

Positions 47 and 68 each coordinate iminosuccinate. C113 is a binding site for [4Fe-4S] cluster. Iminosuccinate-binding positions include 139 to 141 (YAN) and S156. C200 is a [4Fe-4S] cluster binding site. Iminosuccinate contacts are provided by residues 226–228 (HPE) and T243. C297 is a binding site for [4Fe-4S] cluster.

Belongs to the quinolinate synthase family. Type 1 subfamily. It depends on [4Fe-4S] cluster as a cofactor.

It is found in the cytoplasm. The enzyme catalyses iminosuccinate + dihydroxyacetone phosphate = quinolinate + phosphate + 2 H2O + H(+). Its pathway is cofactor biosynthesis; NAD(+) biosynthesis; quinolinate from iminoaspartate: step 1/1. Catalyzes the condensation of iminoaspartate with dihydroxyacetone phosphate to form quinolinate. This Salmonella heidelberg (strain SL476) protein is Quinolinate synthase.